The chain runs to 538 residues: DALR anticodon-binding domain-containing protein 3 (538 aa).

In terms of assembly, part of a complex containing tRNA(Arg) and METTL2. Interacts with tRNA(Arg)(CCU) and tRNA(Arg)(UCU). Interacts with METTL2.

Its function is as follows. Involved in tRNA methylation. Facilitates the recognition and targeting of tRNA(Arg)(CCU) and tRNA(Arg)(UCU) substrates for N(3)-methylcytidine modification by METTL2. This chain is DALR anticodon-binding domain-containing protein 3 (Dalrd3), found in Rattus norvegicus (Rat).